The sequence spans 257 residues: tRNA pseudouridine synthase A (257 aa).

D53 (nucleophile) is an active-site residue. Position 111 (Y111) interacts with substrate.

It belongs to the tRNA pseudouridine synthase TruA family. As to quaternary structure, homodimer.

It catalyses the reaction uridine(38/39/40) in tRNA = pseudouridine(38/39/40) in tRNA. In terms of biological role, formation of pseudouridine at positions 38, 39 and 40 in the anticodon stem and loop of transfer RNAs. The chain is tRNA pseudouridine synthase A from Xanthomonas axonopodis pv. citri (strain 306).